Consider the following 75-residue polypeptide: Venom serine protease inhibitor BiVSPI (75 aa).

A signal peptide spans 1-20 (MSRILFVFLAVMAIFSTSFG). 5 disulfides stabilise this stretch: cysteine 23/cysteine 55, cysteine 32/cysteine 51, cysteine 35/cysteine 47, cysteine 39/cysteine 75, and cysteine 57/cysteine 69. The 53-residue stretch at 23-75 (CGLNEEFKSCGSCEPTCAKPRVTICTMECKIGCQCKSGYLRNGEGTCVLPEKC) folds into the TIL domain.

This sequence belongs to the serine protease inhibitor-like (TIL domain-containing) family. In terms of processing, may be O-glycosylated. In terms of tissue distribution, expressed by the venom gland (at protein level) and expressed in fat body.

It is found in the secreted. The protein localises to the target cell membrane. Functionally, antimicrobial venom serine protease inhibitor. Exhibits inhibitory activity against chymotrypsin (IC(50)=19.56 nM, Ki=15.24 nM) and microbial serine proteases, such as subtilisin A (IC(50)=6.57 nM, Ki=6.83 nM) and proteinase K (IC(50)=7.11 nM, Ki=7.02 nM). Has not activity against trypsin, plasmin, tPA, thrombin, factor Xa or elastase. Binds and inhibits Gram-positive bacteria (B.subtilis (MIC=29.45 uM), B.thuringiensis (MIC=91.03 uM)) and the entomopathogenic fungus B.bassiana (MIC=30.09 uM) but not to E.coli. This chain is Venom serine protease inhibitor BiVSPI, found in Bombus ignitus (Bumblebee).